The chain runs to 235 residues: Large ribosomal subunit protein uL1 (235 aa).

It belongs to the universal ribosomal protein uL1 family. In terms of assembly, part of the 50S ribosomal subunit.

Its function is as follows. Binds directly to 23S rRNA. The L1 stalk is quite mobile in the ribosome, and is involved in E site tRNA release. Protein L1 is also a translational repressor protein, it controls the translation of the L11 operon by binding to its mRNA. This chain is Large ribosomal subunit protein uL1, found in Desulfotalea psychrophila (strain LSv54 / DSM 12343).